The following is a 212-amino-acid chain: Ribonuclease HII (212 aa).

The RNase H type-2 domain maps to 4 to 206 (EVQCGIDEAG…YKKIKEDVES (203 aa)). A divalent metal cation-binding residues include Asp-10, Glu-11, and Asp-103.

This sequence belongs to the RNase HII family. Mn(2+) is required as a cofactor. Requires Mg(2+) as cofactor.

The protein localises to the cytoplasm. The enzyme catalyses Endonucleolytic cleavage to 5'-phosphomonoester.. Functionally, endonuclease that specifically degrades the RNA of RNA-DNA hybrids. In Thermoplasma volcanium (strain ATCC 51530 / DSM 4299 / JCM 9571 / NBRC 15438 / GSS1), this protein is Ribonuclease HII.